The sequence spans 401 residues: S-adenosylmethionine synthase (401 aa).

H16 is a binding site for ATP. D18 is a binding site for Mg(2+). E44 is a K(+) binding site. 2 residues coordinate L-methionine: E57 and Q100. The interval 100 to 110 (QSPDIAQGVNE) is flexible loop. ATP contacts are provided by residues 174-176 (DAK), 241-242 (RF), D250, 256-257 (RK), A273, and K277. D250 provides a ligand contact to L-methionine. K281 is an L-methionine binding site.

Belongs to the AdoMet synthase family. Homotetramer; dimer of dimers. The cofactor is Mg(2+). K(+) is required as a cofactor.

The protein localises to the cytoplasm. The enzyme catalyses L-methionine + ATP + H2O = S-adenosyl-L-methionine + phosphate + diphosphate. Its pathway is amino-acid biosynthesis; S-adenosyl-L-methionine biosynthesis; S-adenosyl-L-methionine from L-methionine: step 1/1. Functionally, catalyzes the formation of S-adenosylmethionine (AdoMet) from methionine and ATP. The overall synthetic reaction is composed of two sequential steps, AdoMet formation and the subsequent tripolyphosphate hydrolysis which occurs prior to release of AdoMet from the enzyme. The protein is S-adenosylmethionine synthase of Streptococcus equi subsp. zooepidemicus (strain MGCS10565).